The chain runs to 189 residues: GTPase NRas (189 aa).

Residues G10–A18 and V29–D30 each bind GTP. The Effector region signature appears at Y32 to Y40. A (Microbial infection) O-linked (Glc) threonine; by P.sordellii toxin TcsL glycan is attached at T35. GTP is bound at residue D57 to Q61. Phosphoserine is present on S89. A GTP-binding site is contributed by N116–D119. A hypervariable region region spans residues Y166–P185. Residue K170 forms a Glycyl lysine isopeptide (Lys-Gly) (interchain with G-Cter in ubiquitin) linkage. C181 carries the S-palmitoyl cysteine lipid modification. C186 carries the S-farnesyl cysteine lipid modification. The propeptide at V187–M189 is removed in mature form.

Belongs to the small GTPase superfamily. Ras family. In terms of assembly, interacts (active GTP-bound form preferentially) with RGS14. Interacts (active GTP-bound form) with RASSF7. Interacts (active GTP-bound form) with both SHOC2 and PP1c (all isoforms) to form a tertiary complex; SHOC2 and PP1c preferably bind M-Ras/MRAS, but they also bind K-Ras/KRAS, N-Ras/NRAS and H-Ras/HRAS. Post-translationally, palmitoylated by the ZDHHC9-GOLGA7 complex. Depalmitoylated by ABHD17A, ABHD17B and ABHD17C. A continuous cycle of de- and re-palmitoylation regulates rapid exchange between plasma membrane and Golgi. Acetylation at Lys-104 prevents interaction with guanine nucleotide exchange factors (GEFs). In terms of processing, fatty-acylated at Lys-169 and/or Lys-170. Post-translationally, ubiquitinated by the BCR(LZTR1) E3 ubiquitin ligase complex at Lys-170 in a non-degradative manner, leading to inhibit Ras signaling by decreasing Ras association with membranes. Phosphorylation at Ser-89 enhances NRAS association with its downstream effectors. In terms of processing, (Microbial infection) Glucosylated at Thr-35 by P.sordellii toxin TcsL.

It is found in the cell membrane. The protein localises to the golgi apparatus membrane. It carries out the reaction GTP + H2O = GDP + phosphate + H(+). Alternates between an inactive form bound to GDP and an active form bound to GTP. Activated by a guanine nucleotide-exchange factor (GEF) and inactivated by a GTPase-activating protein (GAP). Functionally, ras proteins bind GDP/GTP and possess intrinsic GTPase activity. This chain is GTPase NRas (NRAS), found in Homo sapiens (Human).